The chain runs to 272 residues: MTFIQQLEHAWAAGNTLLQVGLDPDPQRFPRELEGKPDAIFQFCREIVDATAPYACSFKPQIAYFAAHRAEDQLEALCAHIRAAHPHLPIVLDAKRGDIGTTAEHYAREAYERYGAHAMTVNPYMGLDSVEPYLGWKDRGVIVLCRTSNPGGSDLQFLKLDNGEPLYLHVAGMVADKWNADGQCGLVVGATFPNELAAVRQRIGDAMPLLVPGIGAQGGDVTATVNAGRNAAGTGMMINSSRAILYASGGDDWRQAAADAARDLRDAINGVR.

The Proton donor role is filled by K95.

This sequence belongs to the OMP decarboxylase family. Type 2 subfamily.

It carries out the reaction orotidine 5'-phosphate + H(+) = UMP + CO2. The protein operates within pyrimidine metabolism; UMP biosynthesis via de novo pathway; UMP from orotate: step 2/2. This Bordetella petrii (strain ATCC BAA-461 / DSM 12804 / CCUG 43448) protein is Orotidine 5'-phosphate decarboxylase.